We begin with the raw amino-acid sequence, 325 residues long: Probable tRNA-dihydrouridine synthase 2 (325 aa).

Residue 18–20 coordinates FMN; sequence PME. Catalysis depends on C105, which acts as the Proton donor. FMN-binding positions include K143, 208-210, and 232-233; these read NGD and GR.

The protein belongs to the Dus family. Requires FMN as cofactor.

The enzyme catalyses a 5,6-dihydrouridine in tRNA + NAD(+) = a uridine in tRNA + NADH + H(+). It catalyses the reaction a 5,6-dihydrouridine in tRNA + NADP(+) = a uridine in tRNA + NADPH + H(+). In terms of biological role, catalyzes the synthesis of 5,6-dihydrouridine (D), a modified base found in the D-loop of most tRNAs, via the reduction of the C5-C6 double bond in target uridines. This is Probable tRNA-dihydrouridine synthase 2 (dus2) from Bacillus subtilis (strain 168).